Reading from the N-terminus, the 100-residue chain is Large ribosomal subunit protein bL28 (100 aa).

It belongs to the bacterial ribosomal protein bL28 family.

This is Large ribosomal subunit protein bL28 from Gluconobacter oxydans (strain 621H) (Gluconobacter suboxydans).